We begin with the raw amino-acid sequence, 342 residues long: Anthranilate phosphoribosyltransferase (342 aa).

Residues G80, 83 to 84 (GD), T88, 90 to 93 (NIST), 108 to 116 (KHGNRAVSS), and S120 each bind 5-phospho-alpha-D-ribose 1-diphosphate. G80 provides a ligand contact to anthranilate. S92 contributes to the Mg(2+) binding site. Position 111 (N111) interacts with anthranilate. Anthranilate is bound at residue R166. Mg(2+)-binding residues include D225 and E226.

It belongs to the anthranilate phosphoribosyltransferase family. As to quaternary structure, homodimer. The cofactor is Mg(2+).

The catalysed reaction is N-(5-phospho-beta-D-ribosyl)anthranilate + diphosphate = 5-phospho-alpha-D-ribose 1-diphosphate + anthranilate. It participates in amino-acid biosynthesis; L-tryptophan biosynthesis; L-tryptophan from chorismate: step 2/5. Functionally, catalyzes the transfer of the phosphoribosyl group of 5-phosphorylribose-1-pyrophosphate (PRPP) to anthranilate to yield N-(5'-phosphoribosyl)-anthranilate (PRA). This Halalkalibacterium halodurans (strain ATCC BAA-125 / DSM 18197 / FERM 7344 / JCM 9153 / C-125) (Bacillus halodurans) protein is Anthranilate phosphoribosyltransferase.